A 570-amino-acid chain; its full sequence is Potassium-transporting ATPase potassium-binding subunit (570 aa).

The next 11 membrane-spanning stretches (helical) occupy residues 7–27 (AEIALTLSLAVAIGWPLGVFL), 65–85 (AYALALLAFNLIGFVFVYAVL), 95–115 (PQGFPGLSGHLAFNTAISFIT), 135–155 (LVLTVQNFVSAATGATVAAAL), 179–199 (LYLLLPLAFVVAVVLAALGLP), 254–274 (LTNLITAISINTLGWAAFFAF), 286–306 (ALVIAAFVLLFAGAVGVYATE), 383–403 (GVAIMVVMALLSVFVAGLMVG), 422–442 (ILAVVIIPLSMLGFSGIAAVL), 489–509 (LGIAMAMGRFMPIVAVLAIAG), and 528–548 (GGLFIGLLIGVILILGGLQFF).

It belongs to the KdpA family. In terms of assembly, the system is composed of three essential subunits: KdpA, KdpB and KdpC.

The protein resides in the cell inner membrane. Part of the high-affinity ATP-driven potassium transport (or Kdp) system, which catalyzes the hydrolysis of ATP coupled with the electrogenic transport of potassium into the cytoplasm. This subunit binds the periplasmic potassium ions and delivers the ions to the membrane domain of KdpB through an intramembrane tunnel. In Caulobacter vibrioides (strain ATCC 19089 / CIP 103742 / CB 15) (Caulobacter crescentus), this protein is Potassium-transporting ATPase potassium-binding subunit.